We begin with the raw amino-acid sequence, 149 residues long: 4-hydroxyphenylacetate 3-monooxygenase, reductase component (149 aa).

Residue 27–34 (ERGMTATA) coordinates FAD. An NAD(+)-binding site is contributed by S37. Residues 48-50 (AVS), 54-55 (KL), and H80 contribute to the FAD site. Residues H116 and 137–140 (YFQR) contribute to the NAD(+) site.

It belongs to the non-flavoprotein flavin reductase family. HpaC subfamily. As to quaternary structure, homodimer. 4-HPA 3-monooxygenase consists of a reductase component HpaC and an oxygenase component HpaB.

The catalysed reaction is a reduced flavin + NAD(+) = an oxidized flavin + NADH + 2 H(+). The protein operates within aromatic compound metabolism; 4-hydroxyphenylacetate degradation; pyruvate and succinate semialdehyde from 4-hydroxyphenylacetate: step 1/7. Its function is as follows. Catalyzes the reduction of free flavins (FMN, FAD and riboflavin) by NADH. Subsequently, the reduced flavins diffuse to the large HpaB component. It utilizes NADH, but not NADPH as an electron donor, and both FAD and FMN as electron acceptors. In Thermus thermophilus (strain ATCC 27634 / DSM 579 / HB8), this protein is 4-hydroxyphenylacetate 3-monooxygenase, reductase component.